A 107-amino-acid chain; its full sequence is Iron-binding protein IscA (107 aa).

3 residues coordinate Fe cation: Cys-35, Cys-99, and Cys-101.

It belongs to the HesB/IscA family. As to quaternary structure, homodimer; may form tetramers and higher multimers. It depends on Fe cation as a cofactor.

Is able to transfer iron-sulfur clusters to apo-ferredoxin. Multiple cycles of [2Fe2S] cluster formation and transfer are observed, suggesting that IscA acts catalytically. Recruits intracellular free iron so as to provide iron for the assembly of transient iron-sulfur cluster in IscU in the presence of IscS, L-cysteine and the thioredoxin reductase system TrxA/TrxB. The protein is Iron-binding protein IscA of Proteus mirabilis (strain HI4320).